Consider the following 198-residue polypeptide: Inosine triphosphate pyrophosphatase (198 aa).

Residue A2 is modified to N-acetylalanine. 14–19 provides a ligand contact to ITP; the sequence is TGNAKK. E44 is a binding site for Mg(2+). ITP is bound by residues K56, 72-73, and K89; that span reads DT. A Phosphoserine modification is found at S146. ITP is bound by residues 149–152, K172, and 177–178; these read FGWD and HR.

This sequence belongs to the HAM1 NTPase family. Homodimer. It depends on Mg(2+) as a cofactor. Requires Mn(2+) as cofactor.

It localises to the cytoplasm. The catalysed reaction is ITP + H2O = IMP + diphosphate + H(+). It carries out the reaction dITP + H2O = dIMP + diphosphate + H(+). The enzyme catalyses XTP + H2O = XMP + diphosphate + H(+). It catalyses the reaction N(6)-hydroxy-dATP + H2O = N(6)-hydroxy-dAMP + diphosphate + H(+). Pyrophosphatase that hydrolyzes the non-canonical purine nucleotides inosine triphosphate (ITP), deoxyinosine triphosphate (dITP) as well as 2'-deoxy-N-6-hydroxylaminopurine triphosphate (dHAPTP) and xanthosine 5'-triphosphate (XTP) to their respective monophosphate derivatives. The enzyme does not distinguish between the deoxy- and ribose forms. Probably excludes non-canonical purines from RNA and DNA precursor pools, thus preventing their incorporation into RNA and DNA and avoiding chromosomal lesions. This Mus musculus (Mouse) protein is Inosine triphosphate pyrophosphatase (Itpa).